The primary structure comprises 168 residues: Xanthine-guanine phosphoribosyltransferase (168 aa).

5-phospho-alpha-D-ribose 1-diphosphate contacts are provided by residues 43–44 (RG) and 102–110 (DDLVDTGAT). Residue Asp-103 coordinates Mg(2+). 2 residues coordinate guanine: Asp-106 and Ile-149. Residues Asp-106 and Ile-149 each contribute to the xanthine site. GMP is bound by residues 106–110 (DTGAT) and 148–149 (WI).

It belongs to the purine/pyrimidine phosphoribosyltransferase family. XGPT subfamily. As to quaternary structure, homotetramer. Requires Mg(2+) as cofactor.

It localises to the cell inner membrane. It catalyses the reaction GMP + diphosphate = guanine + 5-phospho-alpha-D-ribose 1-diphosphate. The enzyme catalyses XMP + diphosphate = xanthine + 5-phospho-alpha-D-ribose 1-diphosphate. The catalysed reaction is IMP + diphosphate = hypoxanthine + 5-phospho-alpha-D-ribose 1-diphosphate. The protein operates within purine metabolism; GMP biosynthesis via salvage pathway; GMP from guanine: step 1/1. It participates in purine metabolism; XMP biosynthesis via salvage pathway; XMP from xanthine: step 1/1. Purine salvage pathway enzyme that catalyzes the transfer of the ribosyl-5-phosphate group from 5-phospho-alpha-D-ribose 1-diphosphate (PRPP) to the N9 position of the 6-oxopurines guanine and xanthine to form the corresponding ribonucleotides GMP (guanosine 5'-monophosphate) and XMP (xanthosine 5'-monophosphate), with the release of PPi. To a lesser extent, also acts on hypoxanthine. This is Xanthine-guanine phosphoribosyltransferase from Nitrobacter hamburgensis (strain DSM 10229 / NCIMB 13809 / X14).